A 91-amino-acid polypeptide reads, in one-letter code: B3 domain-containing protein Os03g0164300 (91 aa).

Positions 1 to 91 (MTNAKMTFAV…VLVLKVHVLK (91 aa)) form a DNA-binding region, TF-B3.

Its subcellular location is the nucleus. The sequence is that of B3 domain-containing protein Os03g0164300 from Oryza sativa subsp. japonica (Rice).